Reading from the N-terminus, the 368-residue chain is UDP-N-acetylglucosamine--N-acetylmuramyl-(pentapeptide) pyrophosphoryl-undecaprenol N-acetylglucosamine transferase (368 aa).

UDP-N-acetyl-alpha-D-glucosamine-binding positions include 10-12 (TGG), asparagine 126, serine 200, isoleucine 255, and glutamine 300.

This sequence belongs to the glycosyltransferase 28 family. MurG subfamily.

Its subcellular location is the cell membrane. The catalysed reaction is Mur2Ac(oyl-L-Ala-gamma-D-Glu-L-Lys-D-Ala-D-Ala)-di-trans,octa-cis-undecaprenyl diphosphate + UDP-N-acetyl-alpha-D-glucosamine = beta-D-GlcNAc-(1-&gt;4)-Mur2Ac(oyl-L-Ala-gamma-D-Glu-L-Lys-D-Ala-D-Ala)-di-trans,octa-cis-undecaprenyl diphosphate + UDP + H(+). Its pathway is cell wall biogenesis; peptidoglycan biosynthesis. Functionally, cell wall formation. Catalyzes the transfer of a GlcNAc subunit on undecaprenyl-pyrophosphoryl-MurNAc-pentapeptide (lipid intermediate I) to form undecaprenyl-pyrophosphoryl-MurNAc-(pentapeptide)GlcNAc (lipid intermediate II). This Lactobacillus helveticus (strain DPC 4571) protein is UDP-N-acetylglucosamine--N-acetylmuramyl-(pentapeptide) pyrophosphoryl-undecaprenol N-acetylglucosamine transferase.